We begin with the raw amino-acid sequence, 307 residues long: Secondary metabolism regulator LAE1 (307 aa).

Belongs to the methyltransferase superfamily. LaeA methyltransferase family. In terms of assembly, component of the heterotrimeric velvet complex composed of LAE1, VEL1 and VEL2; VEL1 acting as a bridging protein between LAE1 and VEL2.

It localises to the nucleus. The catalysed reaction is L-methionyl-[protein] + S-adenosyl-L-methionine = S-methyl-L-methionyl-[protein] + S-adenosyl-L-homocysteine. Methyltransferase that performs automethylation. No other methyl-accepting substrate has been identified yet. Component of the velvet transcription factor complex that acts as a global regulator for secondary metabolite gene expression. Controls the expression of the T-toxin gene cluster. Promotes oxidative stress tolerance and acts as a virulence factors during infection. Negatively regulate mycelial pigmentation and controls sexual development, as well as asexual development during vegetative growth. This Cochliobolus heterostrophus (strain C5 / ATCC 48332 / race O) (Southern corn leaf blight fungus) protein is Secondary metabolism regulator LAE1.